Consider the following 159-residue polypeptide: Endoribonuclease YbeY (159 aa).

Histidine 114, histidine 118, and histidine 124 together coordinate Zn(2+).

Belongs to the endoribonuclease YbeY family. Zn(2+) is required as a cofactor.

The protein localises to the cytoplasm. Single strand-specific metallo-endoribonuclease involved in late-stage 70S ribosome quality control and in maturation of the 3' terminus of the 16S rRNA. The sequence is that of Endoribonuclease YbeY from Pectobacterium atrosepticum (strain SCRI 1043 / ATCC BAA-672) (Erwinia carotovora subsp. atroseptica).